We begin with the raw amino-acid sequence, 251 residues long: Orcokinin peptides type A (251 aa).

The N-terminal stretch at 1 to 20 (MTAQMFTIALLLSLSAIAAA) is a signal peptide. 3 propeptides span residues 21–46 (GTIKTAPARTPSTQDDASFPPDGAPV), 225–231 (DYDVFPD), and 249–251 (NVE).

It belongs to the orcokinin family.

The protein localises to the secreted. Its function is as follows. Myotropic peptides that enhance both the frequency and amplitude of spontaneous hindgut contractions. In Procambarus clarkii (Red swamp crayfish), this protein is Orcokinin peptides type A.